We begin with the raw amino-acid sequence, 360 residues long: Isocitrate dehydrogenase [NAD] regulatory subunit B, mitochondrial (360 aa).

The N-terminal 113 residues, 1–113 (MLGRLRTVVK…MELRKALDLY (113 aa)), are a transit peptide targeting the mitochondrion. Substrate is bound by residues Ser-101, Asn-103, Arg-107, and Arg-140. Residue Asp-227 participates in Mg(2+) binding. Residues 284 to 290 (HHVAADI) and Asn-297 contribute to the NADP(+) site.

This sequence belongs to the isocitrate and isopropylmalate dehydrogenases family. Heterooligomer of catalytic and regulatory subunits. The cofactor is Mg(2+). Mn(2+) serves as cofactor.

The protein localises to the mitochondrion. It catalyses the reaction D-threo-isocitrate + NAD(+) = 2-oxoglutarate + CO2 + NADH. Performs an essential role in the oxidative function of the citric acid cycle. This Dictyostelium discoideum (Social amoeba) protein is Isocitrate dehydrogenase [NAD] regulatory subunit B, mitochondrial (idhB).